The sequence spans 331 residues: Mucin-15 (331 aa).

Positions 1–22 are cleaved as a signal peptide; it reads MLTLAKIALISSLFISLPFARP. Over 23-233 the chain is Extracellular; that stretch reads QKQNPRRNVT…SDTPKENKNT (211 aa). N-linked (GlcNAc...) asparagine glycans are attached at residues Asn30, Asn44, Asn54, Asn59, Asn75, Asn84, Asn120, Asn136, Asn145, Asn152, Asn215, and Asn222. Polar residues predominate over residues 124-162; that stretch reads ADANPLQVSEHSNSTNSPSPENFTWSLDNDTMNSPEDIS. Residues 124 to 186 are disordered; sequence ADANPLQVSE…VTPFTAEPTE (63 aa). Residues 234–254 traverse the membrane as a helical segment; the sequence is GIVFGAILGAILGASLLSLVG. Residues 255-331 are Cytoplasmic-facing; that stretch reads YLLCGQRKTD…DAIPPLRPSI (77 aa). Positions 302–331 are disordered; the sequence is AVSDSSMPEGGESLQDGIPMDAIPPLRPSI.

Highly glycosylated (N- and O-linked carbohydrates).

It localises to the membrane. The chain is Mucin-15 (Muc15) from Mus musculus (Mouse).